The sequence spans 426 residues: Formyl-CoA:oxalate CoA-transferase (426 aa).

Residues glutamine 17–serine 18, arginine 38, leucine 72–lysine 75, asparagine 96–glycine 98, arginine 104, and lysine 136–glutamate 139 each bind CoA. Aspartate 168 acts as the Nucleophile in catalysis. Glycine 247–glutamine 249 contacts substrate.

The protein belongs to the CoA-transferase III family. Frc subfamily. As to quaternary structure, homodimer.

The enzyme catalyses formyl-CoA + oxalate = oxalyl-CoA + formate. It participates in metabolic intermediate degradation; oxalate degradation; CO(2) and formate from oxalate: step 1/2. In terms of biological role, involved in the catabolism of oxalate and in the adapatation to low pH via the induction of the oxalate-dependent acid tolerance response (ATR). Catalyzes the transfer of the CoA moiety from formyl-CoA to oxalate. The polypeptide is Formyl-CoA:oxalate CoA-transferase (Rhodopseudomonas palustris (strain BisB18)).